A 96-amino-acid chain; its full sequence is Large ribosomal subunit protein eL21 (96 aa).

This sequence belongs to the eukaryotic ribosomal protein eL21 family.

This chain is Large ribosomal subunit protein eL21, found in Methanosphaerula palustris (strain ATCC BAA-1556 / DSM 19958 / E1-9c).